Consider the following 497-residue polypeptide: Cytochrome P450 2D19 (497 aa).

Cys-443 contacts heme.

It belongs to the cytochrome P450 family. Requires heme as cofactor.

It is found in the endoplasmic reticulum membrane. Its subcellular location is the microsome membrane. The catalysed reaction is an organic molecule + reduced [NADPH--hemoprotein reductase] + O2 = an alcohol + oxidized [NADPH--hemoprotein reductase] + H2O + H(+). Its function is as follows. Responsible for the metabolism of many drugs and environmental chemicals that it oxidizes. The sequence is that of Cytochrome P450 2D19 (CYP2D19) from Callithrix jacchus (White-tufted-ear marmoset).